We begin with the raw amino-acid sequence, 567 residues long: Septation ring formation regulator EzrA (567 aa).

At 1–2 the chain is on the extracellular side; it reads ME. The chain crosses the membrane as a helical span at residues 3–21; sequence FIIGLIVILLALFSVGYFL. At 22–567 the chain is on the cytoplasmic side; sequence RKNIYKEIDR…AQQEKEYQHQ (546 aa). 3 coiled-coil regions span residues 108–185, 243–375, and 402–529; these read IEDL…YEEE, KGYK…RDHV, and KGHL…ERRF.

This sequence belongs to the EzrA family.

It localises to the cell membrane. Negative regulator of FtsZ ring formation; modulates the frequency and position of FtsZ ring formation. Inhibits FtsZ ring formation at polar sites. Interacts either with FtsZ or with one of its binding partners to promote depolymerization. The chain is Septation ring formation regulator EzrA from Bacillus pumilus (strain SAFR-032).